The sequence spans 21 residues: Protopolybiakinin-1 (21 aa).

Over residues 1–11 (DKNKKPIRVGG) the composition is skewed to basic residues. Positions 1–21 (DKNKKPIRVGGRRPPGFTPFR) are disordered.

Belongs to the bradykinin-related peptide family. As to expression, expressed by the venom gland.

It localises to the secreted. In terms of biological role, causes constriction of the isolated rat ileum muscles (is 13-fold less potent than bradykinin (BK)), as well as degranulation of mast cells (is 7-fold more potent than BK). In vivo, causes algesic effects. Muscle constriction and algesic effects are partially mediated by bradykinin receptors B2 (BDKRB2). This is Protopolybiakinin-1 from Protopolybia exigua (Neotropical social wasp).